A 147-amino-acid polypeptide reads, in one-letter code: Ubiquitin-conjugating enzyme E2 D4 (147 aa).

A UBC core domain is found at 1-147 (MALKRIQKEL…AREWTQKYAM (147 aa)). Cysteine 85 serves as the catalytic Glycyl thioester intermediate.

This sequence belongs to the ubiquitin-conjugating enzyme family.

The catalysed reaction is S-ubiquitinyl-[E1 ubiquitin-activating enzyme]-L-cysteine + [E2 ubiquitin-conjugating enzyme]-L-cysteine = [E1 ubiquitin-activating enzyme]-L-cysteine + S-ubiquitinyl-[E2 ubiquitin-conjugating enzyme]-L-cysteine.. The protein operates within protein modification; protein ubiquitination. In terms of biological role, accepts ubiquitin from the E1 complex and catalyzes its covalent attachment to other proteins. In vitro able to promote polyubiquitination using all 7 ubiquitin Lys residues, but may prefer 'Lys-11' and 'Lys-48'-linked polyubiquitination. In Homo sapiens (Human), this protein is Ubiquitin-conjugating enzyme E2 D4 (UBE2D4).